The chain runs to 119 residues: Large ribosomal subunit protein bL20c (119 aa).

The protein belongs to the bacterial ribosomal protein bL20 family.

Its subcellular location is the plastid. The protein resides in the chloroplast. Functionally, binds directly to 23S ribosomal RNA and is necessary for the in vitro assembly process of the 50S ribosomal subunit. It is not involved in the protein synthesizing functions of that subunit. This Lolium perenne (Perennial ryegrass) protein is Large ribosomal subunit protein bL20c.